We begin with the raw amino-acid sequence, 215 residues long: Vesicle-trafficking protein SEC22b (215 aa).

Residues 1–190 (MVLLTMIARV…RQDAKYLNMR (190 aa)) are Cytoplasmic-facing. The region spanning 6 to 119 (MIARVADGLP…YSFIEFDNYI (114 aa)) is the Longin domain. A v-SNARE coiled-coil homology domain is found at 134–194 (NLSSVNTELQ…KYLNMRSTYA (61 aa)). The chain crosses the membrane as a helical span at residues 191-213 (STYAKLAAVAVFSVMLIVYIRFW). Residues 214–215 (WL) lie on the Lumenal side of the membrane.

This sequence belongs to the synaptobrevin family. As to quaternary structure, component of 2 distinct SNARE complexes.

Its subcellular location is the endoplasmic reticulum membrane. The protein localises to the endoplasmic reticulum-Golgi intermediate compartment membrane. It localises to the golgi apparatus. The protein resides in the cis-Golgi network membrane. It is found in the trans-Golgi network membrane. Its subcellular location is the melanosome. Its function is as follows. SNARE involved in targeting and fusion of ER-derived transport vesicles with the Golgi complex as well as Golgi-derived retrograde transport vesicles with the ER. The protein is Vesicle-trafficking protein SEC22b of Xenopus tropicalis (Western clawed frog).